Here is a 290-residue protein sequence, read N- to C-terminus: Nitrogenase iron protein 1 (290 aa).

An ATP-binding site is contributed by 10–17; sequence GKGGIGKS. Position 98 (Cys-98) interacts with [4Fe-4S] cluster. Position 101 is an ADP-ribosylarginine; by dinitrogenase reductase ADP-ribosyltransferase (Arg-101). Cys-133 provides a ligand contact to [4Fe-4S] cluster.

This sequence belongs to the NifH/BchL/ChlL family. Homodimer. [4Fe-4S] cluster is required as a cofactor. Post-translationally, the reversible ADP-ribosylation of Arg-101 inactivates the nitrogenase reductase and regulates nitrogenase activity.

It carries out the reaction N2 + 8 reduced [2Fe-2S]-[ferredoxin] + 16 ATP + 16 H2O = H2 + 8 oxidized [2Fe-2S]-[ferredoxin] + 2 NH4(+) + 16 ADP + 16 phosphate + 6 H(+). With respect to regulation, nitrogenase holoenzyme is subject to 'conformational protection' by FeSII; under oxidizing conditions FeSII binds to the holoenzyme and reversibly protects it from oxidation. Functionally, the key enzymatic reactions in nitrogen fixation are catalyzed by the nitrogenase complex, which has 2 components: the iron protein (component 2) and a component 1 which is either a molybdenum-iron protein, a vanadium-iron, or an iron-iron protein. The polypeptide is Nitrogenase iron protein 1 (nifH1) (Azotobacter vinelandii).